A 216-amino-acid chain; its full sequence is Outer-membrane lipoprotein LolB (216 aa).

The first 24 residues, 1–24 (MNNLNYFTKISASCAALALMTLAG), serve as a signal peptide directing secretion. Cys25 is lipidated: N-palmitoyl cysteine. Cys25 carries S-diacylglycerol cysteine lipidation.

Belongs to the LolB family. In terms of assembly, monomer.

It is found in the cell outer membrane. Its function is as follows. Plays a critical role in the incorporation of lipoproteins in the outer membrane after they are released by the LolA protein. The protein is Outer-membrane lipoprotein LolB of Shewanella loihica (strain ATCC BAA-1088 / PV-4).